A 257-amino-acid polypeptide reads, in one-letter code: Acetylglutamate kinase (257 aa).

Residues 43-44, Arg65, and Asn157 contribute to the substrate site; that span reads GG. ATP-binding positions include 180–185 and 208–210; these read DVSGIL and IIT.

This sequence belongs to the acetylglutamate kinase family. ArgB subfamily. As to quaternary structure, homodimer.

It localises to the cytoplasm. It catalyses the reaction N-acetyl-L-glutamate + ATP = N-acetyl-L-glutamyl 5-phosphate + ADP. The protein operates within amino-acid biosynthesis; L-arginine biosynthesis; N(2)-acetyl-L-ornithine from L-glutamate: step 2/4. Its function is as follows. Catalyzes the ATP-dependent phosphorylation of N-acetyl-L-glutamate. This is Acetylglutamate kinase from Edwardsiella ictaluri (strain 93-146).